The following is a 130-amino-acid chain: D-ribose pyranase (130 aa).

Histidine 20 serves as the catalytic Proton donor. Substrate is bound by residues aspartate 28, histidine 97, and 119-121 (YSN).

This sequence belongs to the RbsD / FucU family. RbsD subfamily. In terms of assembly, homodecamer.

The protein localises to the cytoplasm. It carries out the reaction beta-D-ribopyranose = beta-D-ribofuranose. The protein operates within carbohydrate metabolism; D-ribose degradation; D-ribose 5-phosphate from beta-D-ribopyranose: step 1/2. In terms of biological role, catalyzes the interconversion of beta-pyran and beta-furan forms of D-ribose. The polypeptide is D-ribose pyranase (Lacticaseibacillus casei (strain BL23) (Lactobacillus casei)).